The following is a 327-amino-acid chain: Methionine import ATP-binding protein MetN (327 aa).

In terms of domain architecture, ABC transporter spans 3–239 (VELKNIEKIY…PKHAVTKELL (237 aa)). 36 to 43 (GYSGAGKS) contributes to the ATP binding site.

It belongs to the ABC transporter superfamily. Methionine importer (TC 3.A.1.24) family. As to quaternary structure, the complex is composed of two ATP-binding proteins (MetN), two transmembrane proteins (MetI) and a solute-binding protein (MetQ).

The protein localises to the cell inner membrane. It carries out the reaction L-methionine(out) + ATP + H2O = L-methionine(in) + ADP + phosphate + H(+). The enzyme catalyses D-methionine(out) + ATP + H2O = D-methionine(in) + ADP + phosphate + H(+). In terms of biological role, part of the ABC transporter complex MetNIQ involved in methionine import. Responsible for energy coupling to the transport system. The sequence is that of Methionine import ATP-binding protein MetN from Helicobacter pylori (strain J99 / ATCC 700824) (Campylobacter pylori J99).